We begin with the raw amino-acid sequence, 321 residues long: Iron(3+)-hydroxamate-binding protein YxeB (321 aa).

Positions 1–20 are cleaved as a signal peptide; sequence MKKNILLVGMLVLLLMFVSA. Cys-21 is lipidated: N-palmitoyl cysteine. Cys-21 carries S-diacylglycerol cysteine lipidation. Residues 24–33 show a composition bias toward low complexity; it reads TASKGSSSDS. The segment at 24-48 is disordered; it reads TASKGSSSDSASEKTEMRTYKSPKG. The Fe/B12 periplasmic-binding domain occupies 58 to 316; sequence RIVTDFYAGE…IITDMLIKRA (259 aa).

It belongs to the bacterial solute-binding protein 8 family. The complex is composed of an ATP-binding protein (FhuC), two transmembrane proteins (FhuB and FhuG) and a solute-binding protein (FhuD or YxeB).

It localises to the cell membrane. It is found in the membrane raft. Part of the ABC transporter complex FhuCBGD involved in iron(3+)-hydroxamate import. Binds the iron(3+)-hydroxamate complex and transfers it to the membrane-bound permease. Partially required for the transport of desferrioxamine. The chain is Iron(3+)-hydroxamate-binding protein YxeB (yxeB) from Bacillus subtilis (strain 168).